A 593-amino-acid chain; its full sequence is ETS-related transcription factor Elf-2 (593 aa).

Phosphoserine is present on Ser107. Residues 146 to 201 are disordered; it reads VEVSTEESEPMDTSPIPTSPDSHEPMKKKKVGRKPKTQQSPISNGSPELGIKKKPR. Positions 171-181 are enriched in basic residues; it reads MKKKKVGRKPK. Residue Thr182 is modified to Phosphothreonine. Over residues 182 to 191 the composition is skewed to polar residues; sequence TQQSPISNGS. Phosphoserine occurs at positions 185 and 191. The ETS DNA-binding region spans 208–290; the sequence is TYLWEFLLDL…EGQRLVYQFK (83 aa). Phosphoserine is present on residues Ser363 and Ser372. Thr376 carries the phosphothreonine modification. Ser430 is subject to Phosphoserine. At Arg494 the chain carries Omega-N-methylarginine. Phosphothreonine is present on Thr521. Lys536 is covalently cross-linked (Glycyl lysine isopeptide (Lys-Gly) (interchain with G-Cter in SUMO2)).

This sequence belongs to the ETS family. As to quaternary structure, interacts with the LIM domains of LMO2. Interacts via its N-terminal region with RUNX1. In terms of tissue distribution, expressed in all fetal and adult tissues examined. Among fetal tissues, highest levels of expression detected in heart, lung, liver and kidney, and lower levels in brain. Among adult tissues, highest levels of expression detected in heart, placenta, lung, skeletal muscle, spleen, thymus, testis and ovary. Moderate expression in prostate, small intestine, kidney, liver and pancreas, and weak expression in colon, brain and peripheral blood lymphocytes.

It localises to the nucleus. In terms of biological role, isoform 1 transcriptionally activates the LYN and BLK promoters and acts synergistically with RUNX1 to transactivate the BLK promoter. Its function is as follows. Isoform 2 may function in repression of RUNX1-mediated transactivation. In Homo sapiens (Human), this protein is ETS-related transcription factor Elf-2.